The sequence spans 256 residues: Sugar fermentation stimulation protein homolog (256 aa).

The protein belongs to the SfsA family.

This is Sugar fermentation stimulation protein homolog from Prochlorococcus marinus (strain MIT 9211).